Reading from the N-terminus, the 413-residue chain is Palmitoyltransferase ZDHHC6 (413 aa).

The Cytoplasmic portion of the chain corresponds to 1-24; sequence MGTFCSVVKFENLQELKRLCHWGP. Residues 25–45 form a helical membrane-spanning segment; that stretch reads IIALGVIAICSAMAMIDSVLW. At 46–57 the chain is on the lumenal side; that stretch reads YWPLHTTGGSVN. Residues 58–78 traverse the membrane as a helical segment; that stretch reads FIMLINWTVMILYNYFNAMFV. Topologically, residues 79 to 143 are cytoplasmic; it reads GPGFVPLGWK…NCCGYQNHAS (65 aa). Residues 99 to 149 enclose the DHHC domain; it reads QYCKVCQAYKAPRSHHCRKCNRCVMKMDHHCPWINNCCGYQNHASFTLFLL. C129 (S-palmitoyl cysteine intermediate) is an active-site residue. A helical transmembrane segment spans residues 144–164; the sequence is FTLFLLLAPLGCIHAAFIFVM. Residues 165 to 194 lie on the Lumenal side of the membrane; that stretch reads TMYTQLYNRLSFGWNTVKIDMSAARRDPLP. A helical transmembrane segment spans residues 195-215; that stretch reads IIPFGLAAFAATLFALGLALG. The Cytoplasmic portion of the chain corresponds to 216–413; that stretch reads TTIAVGMLFF…QAPEGEKKNR (198 aa). The 86-residue stretch at 313-398 folds into the SH3 domain; sequence VRSVRYKVIE…PRNCVEKCPC (86 aa). 3 S-palmitoyl cysteine lipidation sites follow: C328, C329, and C343. Positions 410–413 match the Di-lysine motif motif; the sequence is KKNR.

This sequence belongs to the DHHC palmitoyltransferase family. As to quaternary structure, homooligomerizes. Interacts with SELENOK. Post-translationally, palmitoylated at 3 different sites by ZDHHC16. The combination of the different palmitoylation events strongly affects the quaternary assembly of ZDHHC6, its localization, stability and function. Palmitoylation at Cys-328 accelerates the turnover of ZDHHC6. Depalmitoylated by LYPLA2.

It is found in the endoplasmic reticulum membrane. The catalysed reaction is L-cysteinyl-[protein] + hexadecanoyl-CoA = S-hexadecanoyl-L-cysteinyl-[protein] + CoA. It carries out the reaction L-cysteinyl-[protein] + octadecanoyl-CoA = S-octadecanoyl-L-cysteinyl-[protein] + CoA. Its function is as follows. Endoplasmic reticulum palmitoyl acyltransferase that mediates palmitoylation of proteins such as AMFR, CALX, ITPR1 and TFRC. Palmitoylates calnexin (CALX), which is required for its association with the ribosome-translocon complex and efficient folding of glycosylated proteins. Mediates palmitoylation of AMFR, promoting AMFR distribution to the peripheral endoplasmic reticulum. Together with SELENOK, palmitoylates ITPR1 in immune cells, leading to regulate ITPR1 stability and function. Stearoyltransferase that mediates stearoylation of TFRC to inhibit TFRC-mediated activation of the JNK pathway and mitochondrial fragmentation. The chain is Palmitoyltransferase ZDHHC6 from Bos taurus (Bovine).